Consider the following 314-residue polypeptide: 4-hydroxy-3-methylbut-2-enyl diphosphate reductase (314 aa).

Cys-12 provides a ligand contact to [4Fe-4S] cluster. Positions 41 and 74 each coordinate (2E)-4-hydroxy-3-methylbut-2-enyl diphosphate. Dimethylallyl diphosphate contacts are provided by His-41 and His-74. 2 residues coordinate isopentenyl diphosphate: His-41 and His-74. Position 96 (Cys-96) interacts with [4Fe-4S] cluster. Position 124 (His-124) interacts with (2E)-4-hydroxy-3-methylbut-2-enyl diphosphate. Residue His-124 participates in dimethylallyl diphosphate binding. His-124 is a binding site for isopentenyl diphosphate. Glu-126 acts as the Proton donor in catalysis. A (2E)-4-hydroxy-3-methylbut-2-enyl diphosphate-binding site is contributed by Thr-167. Cys-197 is a binding site for [4Fe-4S] cluster. Ser-225, Ser-226, Asn-227, and Ser-269 together coordinate (2E)-4-hydroxy-3-methylbut-2-enyl diphosphate. Positions 225, 226, 227, and 269 each coordinate dimethylallyl diphosphate. 4 residues coordinate isopentenyl diphosphate: Ser-225, Ser-226, Asn-227, and Ser-269.

The protein belongs to the IspH family. It depends on [4Fe-4S] cluster as a cofactor.

The catalysed reaction is isopentenyl diphosphate + 2 oxidized [2Fe-2S]-[ferredoxin] + H2O = (2E)-4-hydroxy-3-methylbut-2-enyl diphosphate + 2 reduced [2Fe-2S]-[ferredoxin] + 2 H(+). It carries out the reaction dimethylallyl diphosphate + 2 oxidized [2Fe-2S]-[ferredoxin] + H2O = (2E)-4-hydroxy-3-methylbut-2-enyl diphosphate + 2 reduced [2Fe-2S]-[ferredoxin] + 2 H(+). It participates in isoprenoid biosynthesis; dimethylallyl diphosphate biosynthesis; dimethylallyl diphosphate from (2E)-4-hydroxy-3-methylbutenyl diphosphate: step 1/1. Its pathway is isoprenoid biosynthesis; isopentenyl diphosphate biosynthesis via DXP pathway; isopentenyl diphosphate from 1-deoxy-D-xylulose 5-phosphate: step 6/6. Functionally, catalyzes the conversion of 1-hydroxy-2-methyl-2-(E)-butenyl 4-diphosphate (HMBPP) into a mixture of isopentenyl diphosphate (IPP) and dimethylallyl diphosphate (DMAPP). Acts in the terminal step of the DOXP/MEP pathway for isoprenoid precursor biosynthesis. This chain is 4-hydroxy-3-methylbut-2-enyl diphosphate reductase, found in Psychromonas ingrahamii (strain DSM 17664 / CCUG 51855 / 37).